A 313-amino-acid chain; its full sequence is Serine/threonine-protein kinase SZE1 (313 aa).

Glycine 2 carries N-myristoyl glycine lipidation. In terms of domain architecture, Protein kinase spans 43–311; the sequence is MELGESLGYI…EVLDNLNAIA (269 aa). ATP contacts are provided by residues 49 to 57 and lysine 71; that span reads LGYINPKTL.

It belongs to the protein kinase superfamily. Ser/Thr protein kinase family. In terms of assembly, component of an immune signaling complex made of, at least, SZE1, BKN2/SZE2, ZAR1 and ZED1. Interacts directly with ZED1, ZAR1 and Pseudomonas syringae HOPZ1A at the plasma membrane. In terms of processing, N-terminal myristoylation is critical for plasma membrane localization and implication in defense responses. Post-translationally, autophosphorylated. Expressed in roots, seedlings, rosette leaves, floral organs, siliques and inflorescence stems.

It localises to the cell membrane. It catalyses the reaction L-seryl-[protein] + ATP = O-phospho-L-seryl-[protein] + ADP + H(+). The catalysed reaction is L-threonyl-[protein] + ATP = O-phospho-L-threonyl-[protein] + ADP + H(+). In terms of biological role, together with BKN2/SZE2 and ZED1, required for effector-triggered immunity (e.g. Pseudomonas syringae effector type III HopZ1a) via the activation of ZAR1, thus being essential for resistance against P.syringae pv. tomato DC3000 expressing HopZ1a. This Arabidopsis thaliana (Mouse-ear cress) protein is Serine/threonine-protein kinase SZE1.